The sequence spans 351 residues: Amylovoran biosynthesis glycosyltransferase AmsD (351 aa).

The protein belongs to the glycosyltransferase group 1 family. Glycosyltransferase 4 subfamily.

It participates in glycan metabolism; exopolysaccharide biosynthesis. Functionally, involved in the biosynthesis of amylovoran which functions as a virulence factor. May be involved in the formation of galactose alpha-1,6 linkages in amylovoran. The protein is Amylovoran biosynthesis glycosyltransferase AmsD (amsD) of Erwinia amylovora (Fire blight bacteria).